The primary structure comprises 481 residues: Cysteine--tRNA ligase (481 aa).

Position 29 (C29) interacts with Zn(2+). The 'HIGH' region motif lies at 31–41; that stretch reads PTVYDYSHLGH. Zn(2+) contacts are provided by C210, H235, and E239. Positions 272–276 match the 'KMSKS' region motif; the sequence is KMSKS. Residue K275 participates in ATP binding.

Belongs to the class-I aminoacyl-tRNA synthetase family. In terms of assembly, monomer. Requires Zn(2+) as cofactor.

It localises to the cytoplasm. The catalysed reaction is tRNA(Cys) + L-cysteine + ATP = L-cysteinyl-tRNA(Cys) + AMP + diphosphate. This chain is Cysteine--tRNA ligase, found in Anaeromyxobacter dehalogenans (strain 2CP-C).